The following is a 309-amino-acid chain: Pyridoxal 5'-phosphate synthase subunit PDX1.1 (309 aa).

Position 1 is an N-acetylmethionine (methionine 1). D-ribose 5-phosphate is bound at residue aspartate 41. The Schiff-base intermediate with D-ribose 5-phosphate role is filled by lysine 98. A D-ribose 5-phosphate-binding site is contributed by glycine 170. A D-glyceraldehyde 3-phosphate-binding site is contributed by arginine 182. D-ribose 5-phosphate contacts are provided by residues glycine 231 and 252–253 (GS).

This sequence belongs to the PdxS/SNZ family. As to quaternary structure, homodimer or heterodimer with PDX1.2 or PDX1.3. Interacts with PDX2. As to expression, expressed in flowers, shoots, leaves and weakly in roots.

The protein resides in the cytoplasm. The catalysed reaction is aldehydo-D-ribose 5-phosphate + D-glyceraldehyde 3-phosphate + L-glutamine = pyridoxal 5'-phosphate + L-glutamate + phosphate + 3 H2O + H(+). Its pathway is cofactor biosynthesis; pyridoxal 5'-phosphate biosynthesis. In terms of biological role, catalyzes the formation of pyridoxal 5'-phosphate from ribose 5-phosphate (RBP), glyceraldehyde 3-phosphate (G3P) and ammonia. The ammonia is provided by PDX2. Can also use ribulose 5-phosphate and dihydroxyacetone phosphate as substrates, resulting from enzyme-catalyzed isomerization of RBP and G3P, respectively. Also plays an indirect role in resistance to singlet oxygen-generating photosensitizers. This Arabidopsis thaliana (Mouse-ear cress) protein is Pyridoxal 5'-phosphate synthase subunit PDX1.1 (PDX11).